The sequence spans 270 residues: DNA repair protein RecO (270 aa).

The disordered stretch occupies residues 202–221 (PELPPSTIDADTDNPSQPPS).

Belongs to the RecO family.

In terms of biological role, involved in DNA repair and RecF pathway recombination. The sequence is that of DNA repair protein RecO from Rhodopirellula baltica (strain DSM 10527 / NCIMB 13988 / SH1).